We begin with the raw amino-acid sequence, 201 residues long: MSSKLERLSSSLQNILGAKVRSVVVDRGEVTLEVAAADYLAAAQMLRDHRDLRFEELIDLTGLDYSAYGNGAWTGKRFAVAVHLLSLTHNWRIRLRAFADDDAFPMFESLVGVWPGVNWYEREAFDLYGLMFAGHPDLRRILTDYGFVGHPFRKDFPVSGYVEMRYDPEQGRVVYQPVTIEPRENTPRIVREENYGDVGNG.

It belongs to the complex I 30 kDa subunit family. In terms of assembly, NDH-1 is composed of 14 different subunits. Subunits NuoB, C, D, E, F, and G constitute the peripheral sector of the complex.

The protein resides in the cell inner membrane. It catalyses the reaction a quinone + NADH + 5 H(+)(in) = a quinol + NAD(+) + 4 H(+)(out). NDH-1 shuttles electrons from NADH, via FMN and iron-sulfur (Fe-S) centers, to quinones in the respiratory chain. The immediate electron acceptor for the enzyme in this species is believed to be ubiquinone. Couples the redox reaction to proton translocation (for every two electrons transferred, four hydrogen ions are translocated across the cytoplasmic membrane), and thus conserves the redox energy in a proton gradient. This Aromatoleum aromaticum (strain DSM 19018 / LMG 30748 / EbN1) (Azoarcus sp. (strain EbN1)) protein is NADH-quinone oxidoreductase subunit C.